A 506-amino-acid polypeptide reads, in one-letter code: MLVDTGLGLISELRARLGWAALLQIVPVTVVAYNLLWFIYTSFFSSLRKIPGPFLARISRVWEIKKAATGNIHEIVMDLHRCHGPIVRIGPNRYDFDTMEALKIIYRIGNALPKADYYIPFGLPSSPNLFDVQNPARHSAMKKQVASLYTMTALLSYEAGVDGQTIILKEQLQRFCDQKQVIDLPQFLQYYAFDVIGVITVGKSMGMMETNSDTNGACGALDAMWHYSSMMAFIPHMHAWWLRLSSLLPIDVPIKGLTEYVEQRIIQYRLKAAEFGDDDALKGENNFLAKLILMERQGTVTSTETQQAVGLNIGAGSDTTANALSSILYFLYTNPRTLRRLREELDTHVKEDPIRFQQSQSMPYLQAVIKEALRLHPGVGTQLTRVVPKGGLVIEGQFFPEGAEVGVNGWALYHNKAIFGNDASVFRPERWLETKGNLNIGGSFAFGAGSRSCIGKNISILEMSKAIPQIVRNFDIEINHGDMTWKNECWWFVKPEYKAMIKPRAA.

A heme-binding site is contributed by Cys453.

This sequence belongs to the cytochrome P450 family. The cofactor is heme.

Can detoxify the phytoalexin pisatin from garden pea. Pisatin is an antimicrobial compound produced by pea in response to infection by plant pathogens. In Fusarium vanettenii (Neocosmospora pisi), this protein is Pisatin demethylase (PDA6-1).